The chain runs to 158 residues: SsrA-binding protein (158 aa).

Residues 136-151 (KRADSKSRDWARDKQR) show a composition bias toward basic and acidic residues. The tract at residues 136 to 158 (KRADSKSRDWARDKQRIMKHSTR) is disordered.

The protein belongs to the SmpB family.

It is found in the cytoplasm. Functionally, required for rescue of stalled ribosomes mediated by trans-translation. Binds to transfer-messenger RNA (tmRNA), required for stable association of tmRNA with ribosomes. tmRNA and SmpB together mimic tRNA shape, replacing the anticodon stem-loop with SmpB. tmRNA is encoded by the ssrA gene; the 2 termini fold to resemble tRNA(Ala) and it encodes a 'tag peptide', a short internal open reading frame. During trans-translation Ala-aminoacylated tmRNA acts like a tRNA, entering the A-site of stalled ribosomes, displacing the stalled mRNA. The ribosome then switches to translate the ORF on the tmRNA; the nascent peptide is terminated with the 'tag peptide' encoded by the tmRNA and targeted for degradation. The ribosome is freed to recommence translation, which seems to be the essential function of trans-translation. The protein is SsrA-binding protein of Photobacterium profundum (strain SS9).